A 540-amino-acid polypeptide reads, in one-letter code: Putative F-box/LRR-repeat protein At5g41840 (540 aa).

The F-box domain occupies 13–61; it reads GDRISGLPDALICHILSFLPTKEAASTTVLAKRWKPLLAFVPNLNFDDS. 7 LRR repeats span residues 80 to 105, 137 to 165, 189 to 214, 217 to 242, 254 to 282, 329 to 360, and 361 to 386; these read FMSFVDSVLALQAKTKTPLKRFHVKC, RNYCENSSFYSLPSKIFVSKTLVRLKIQF, YFKIETSMLNKLLSGCHALEELVLAN, WADSSEDEACHVSVSIPTLKRLNFCR, YEDYDEENINEGVSLSFDNPNLVYLEYSD, ILYLSDDTLEVLSCCRERIPVFDNLLELTIKT, and TPYVGWKSLPPLLKSCPSLETLVFEG.

This Arabidopsis thaliana (Mouse-ear cress) protein is Putative F-box/LRR-repeat protein At5g41840.